A 149-amino-acid chain; its full sequence is Heavy metal-associated isoprenylated plant protein 21 (149 aa).

One can recognise an HMA domain in the interval leucine 25–glutamate 88. A metal cation-binding residues include cysteine 36 and cysteine 39. At cysteine 146 the chain carries Cysteine methyl ester. Residue cysteine 146 is the site of S-farnesyl cysteine attachment. Positions serine 147–methionine 149 are cleaved as a propeptide — removed in mature form.

Belongs to the HIPP family. As to quaternary structure, interacts with ZHD11/HB29. In terms of tissue distribution, expressed at low levels in leaves and sepals.

It localises to the membrane. In terms of biological role, heavy-metal-binding protein. Binds cadmium. May be involved in cadmium transport and play a role in cadmium detoxification. The polypeptide is Heavy metal-associated isoprenylated plant protein 21 (Arabidopsis thaliana (Mouse-ear cress)).